Reading from the N-terminus, the 262-residue chain is Cytochrome b mRNA maturase bI2 (262 aa).

The protein belongs to the LAGLIDADG endonuclease family.

The protein localises to the mitochondrion. Functionally, this protein is responsible for splicing and maturation of cytochrome b mRNA. Specifically, it may be responsible for the splicing specificity of the second intron. The sequence is that of Cytochrome b mRNA maturase bI2 (bI2) from Debaryomyces hansenii (strain ATCC 36239 / CBS 767 / BCRC 21394 / JCM 1990 / NBRC 0083 / IGC 2968) (Yeast).